The chain runs to 198 residues: Recombination protein RecR (198 aa).

The C4-type zinc-finger motif lies at 58-73 (CKVCQTLTDKEICPIC). A Toprim domain is found at 81-175 (KVIMVVENTR…KVSRIASGVP (95 aa)).

This sequence belongs to the RecR family.

Its function is as follows. May play a role in DNA repair. It seems to be involved in an RecBC-independent recombinational process of DNA repair. It may act with RecF and RecO. The polypeptide is Recombination protein RecR (Lachnoclostridium phytofermentans (strain ATCC 700394 / DSM 18823 / ISDg) (Clostridium phytofermentans)).